The chain runs to 144 residues: Transcription antitermination protein NusB (144 aa).

Belongs to the NusB family.

In terms of biological role, involved in transcription antitermination. Required for transcription of ribosomal RNA (rRNA) genes. Binds specifically to the boxA antiterminator sequence of the ribosomal RNA (rrn) operons. This chain is Transcription antitermination protein NusB, found in Dictyoglomus turgidum (strain DSM 6724 / Z-1310).